The primary structure comprises 65 residues: Large ribosomal subunit protein bL35 (65 aa).

It belongs to the bacterial ribosomal protein bL35 family.

The sequence is that of Large ribosomal subunit protein bL35 from Neisseria meningitidis serogroup A / serotype 4A (strain DSM 15465 / Z2491).